A 40-amino-acid chain; its full sequence is Muscarinic m1-toxin4 (40 aa).

An intrachain disulfide couples cysteine 3 to cysteine 24.

Belongs to the three-finger toxin family. Short-chain subfamily. Aminergic toxin sub-subfamily. In terms of assembly, monomer. Contains 4 disulfide bonds. As to expression, expressed by the venom gland.

The protein resides in the secreted. Its function is as follows. Binds irreversibly and specifically to M1 (CHRM1) muscarinic acetylcholine receptors, blocking further binding of antagonists and preventing the action of agonists. The polypeptide is Muscarinic m1-toxin4 (Dendroaspis angusticeps (Eastern green mamba)).